Reading from the N-terminus, the 217-residue chain is Eukaryotic translation initiation factor 4E (217 aa).

Residues 1-11 (MATVEPETTPT) are compositionally biased toward low complexity. Positions 1-27 (MATVEPETTPTTNPPPAEEEKTESNQE) are disordered. A2 is modified (N-acetylalanine). The residue at position 22 (T22) is a Phosphothreonine. Residues 37–40 (HPLQ) form an EIF4EBP1/2/3 binding region. An mRNA-binding site is contributed by 56–57 (WQ). Positions 73–77 (WALYN) are EIF4EBP1/2/3 binding. 102–103 (WE) serves as a coordination point for mRNA. Residues 132-139 (ETLLCLIG) form an EIF4EBP1/2/3 binding region. Residues 157–162 (RAKGDK) and 205–207 (TKS) each bind mRNA. S209 carries the post-translational modification Phosphoserine; by PKC and MKNK2.

It belongs to the eukaryotic initiation factor 4E family. As to quaternary structure, eIF4F is a multi-subunit complex, the composition of which varies with external and internal environmental conditions. It is composed of at least EIF4A, EIF4E and EIF4G1/EIF4G3. EIF4E is also known to interact with other partners. Interacts with EIF4ENIF1/4E-T; promotes recruitment to P-bodies and import into the nucleus. Hypophosphorylated EIF4EBP1, EIF4EBP2 and EIF4EBP3 compete with EIF4G1/EIF4G3 to interact with EIF4E; insulin stimulated MAP-kinase (MAPK1 and MAPK3) phosphorylation of EIF4EBP1 causes dissociation of the complex allowing EIF4G1/EIF4G3 to bind and consequent initiation of translation. Interacts mutually exclusive with EIF4A1 or EIF4A2. Interacts with NGDN and PIWIL2. Component of the CYFIP1-EIF4E-FMR1 complex composed of CYFIP, EIF4E and FMR1. Interacts directly with CYFIP1. Interacts with CLOCK. Binds to MKNK2 in nucleus. Interacts with LIMD1, WTIP and AJUBA. Interacts with APOBEC3G in an RNA-dependent manner. Interacts with LARP1. Interacts with METTL3. Interacts with RBM24; this interaction prevents EIF4E from binding to p53/TP53 mRNA and inhibits the assembly of translation initiation complex. Interacts with DDX3X; interaction is direct and in an RNA-independent manner; this interaction enhances EIF4E cap-binding ability and is required for the repression of cap-dependent translation and the increase of IRES-mediated translation. DDX3X competes with EIF4G1 for interaction with EIF4E. Interacts with EIF4G1; which in a mutual exclusive interaction associates either with EIF1 or with EIF4E on a common binding site. Interacts with BTG4 and CNOT7. Interacts with LRPPRC (via N-terminus); the interaction promotes association of EIF4E with 4ESE-containing mRNAs. Interacts with mRNA cleavage enzyme CPSF3 and its cofactor CPSF1. Interacts (via RING-type zinc finger) with PML; the interaction results in conformational changes of both interacting proteins and reduces EIF4E affinity for the 5' m7G cap of mRNA, thus reducing EIF4E-mediated mRNA nuclear export. Interacts with homeobox protein HHEX/PRH; the interaction inhibits EIF4E-mediated mRNA nuclear export. Interacts with homeobox protein HOXA9; the interaction positively regulates EIF4E-mediated mRNA nuclear export. Interacts with homeobox protein EMX2. In terms of assembly, (Microbial infection) Interacts with murine norovirus viral genome-linked protein; this interaction plays a role in translation of viral proteins. In terms of processing, phosphorylation increases the ability of the protein to bind to mRNA caps and to form the eIF4F complex. Phosphorylation also enhances its mRNA transport function. Phosphorylation at Ser-209 is not essential for protein synthesis.

Its subcellular location is the cytoplasm. The protein localises to the P-body. It is found in the stress granule. It localises to the nucleus. The protein resides in the nucleus speckle. Its subcellular location is the nuclear body. Its function is as follows. Acts in the cytoplasm to initiate and regulate protein synthesis and is required in the nucleus for export of a subset of mRNAs from the nucleus to the cytoplasm which promotes processes such as RNA capping, processing and splicing. Component of the protein complex eIF4F, which is involved in the recognition of the mRNA cap, ATP-dependent unwinding of 5'-terminal secondary structure and recruitment of mRNA to the ribosome. This protein recognizes and binds the 7-methylguanosine (m7G)-containing mRNA cap during an early step in the initiation of protein synthesis and facilitates ribosome binding by inducing the unwinding of the mRNAs secondary structures. Together with EIF4G1, antagonizes the scanning promoted by EIF1-EIF4G1 and is required for TISU translation, a process where the TISU element recognition makes scanning unnecessary. In addition to its role in translation initiation, also acts as a regulator of translation and stability in the cytoplasm. Component of the CYFIP1-EIF4E-FMR1 complex which binds to the mRNA cap and mediates translational repression: in the complex, EIF4E mediates the binding to the mRNA cap. Component of a multiprotein complex that sequesters and represses translation of proneurogenic factors during neurogenesis. In P-bodies, component of a complex that mediates the storage of translationally inactive mRNAs in the cytoplasm and prevents their degradation. May play an important role in spermatogenesis through translational regulation of stage-specific mRNAs during germ cell development. As well as its roles in translation, also involved in mRNA nucleocytoplasmic transport. Its role in mRNA export from the nucleus to the cytoplasm relies on its ability to bind the m7G cap of RNAs and on the presence of the 50-nucleotide EIF4E sensitivity element (4ESE) in the 3'UTR of sensitive transcripts. Interaction with the 4ESE is mediated by LRPPRC which binds simultaneously to both EIF4E and the 4ESE, thereby acting as a platform for assembly for the RNA export complex. EIF4E-dependent mRNA export is independent of ongoing protein or RNA synthesis and is also NFX1-independent but is XPO1-dependent with LRPPRC interacting with XPO1 to form an EIF4E-dependent mRNA export complex. Alters the composition of the cytoplasmic face of the nuclear pore to promote RNA export by reducing RANBP2 expression, relocalizing nucleoporin NUP214 and increasing expression of RANBP1 and RNA export factors DDX19 and GLE1. Promotes the nuclear export of cyclin CCND1 mRNA. Promotes the nuclear export of NOS2/iNOS mRNA. Promotes the nuclear export of MDM2 mRNA. Also promotes the export of additional mRNAs, including others involved in the cell cycle. In the nucleus, binds to capped splice factor-encoding mRNAs and stimulates their nuclear export to enhance splice factor production by increasing their cytoplasmic availability to the translation machinery. May also regulate splicing through interaction with the spliceosome in an RNA and m7G cap-dependent manner. Also binds to some pre-mRNAs and may play a role in their recruitment to the spliceosome. Promotes steady-state capping of a subset of coding and non-coding RNAs by mediating nuclear export of capping machinery mRNAs including RNMT, RNGTT and RAMAC to enhance their translation. Stimulates mRNA 3'-end processing by promoting the expression of several core cleavage complex factors required for mRNA cleavage and polyadenylation, and may also have a direct effect through its interaction with the CPSF3 cleavage enzyme. Rescues cells from apoptosis by promoting activation of serine/threonine-protein kinase AKT1 through mRNA export of NBS1 which potentiates AKT1 phosphorylation and also through mRNA export of AKT1 effectors, allowing for increased production of these proteins. The protein is Eukaryotic translation initiation factor 4E of Mus musculus (Mouse).